A 369-amino-acid chain; its full sequence is Nuclear pore complex-interacting protein family member A6 (369 aa).

The interval 151-170 (SMKEREHGEKERQVSEAEEN) is disordered.

This sequence belongs to the NPIP family.

In Homo sapiens (Human), this protein is Nuclear pore complex-interacting protein family member A6.